A 159-amino-acid chain; its full sequence is NADH-quinone oxidoreductase subunit I (159 aa).

4Fe-4S ferredoxin-type domains follow at residues 51-80 (RRYE…IEAD) and 90-119 (TRYD…EGPN). The [4Fe-4S] cluster site is built by Cys-60, Cys-63, Cys-66, Cys-70, Cys-99, Cys-102, Cys-105, and Cys-109.

This sequence belongs to the complex I 23 kDa subunit family. NDH-1 is composed of 14 different subunits. Subunits NuoA, H, J, K, L, M, N constitute the membrane sector of the complex. It depends on [4Fe-4S] cluster as a cofactor.

It localises to the cell inner membrane. The catalysed reaction is a quinone + NADH + 5 H(+)(in) = a quinol + NAD(+) + 4 H(+)(out). Its function is as follows. NDH-1 shuttles electrons from NADH, via FMN and iron-sulfur (Fe-S) centers, to quinones in the respiratory chain. The immediate electron acceptor for the enzyme in this species is believed to be ubiquinone. Couples the redox reaction to proton translocation (for every two electrons transferred, four hydrogen ions are translocated across the cytoplasmic membrane), and thus conserves the redox energy in a proton gradient. This chain is NADH-quinone oxidoreductase subunit I, found in Rickettsia akari (strain Hartford).